A 428-amino-acid polypeptide reads, in one-letter code: MFIDIAKVFIKSGKGGDGAISFRREKYVPLGGPNGGDGGDGGDIILKVDTGITTLLDFKYKKKFIAEDGENGGASKCYGRAGKDLIIKVPMGTIIREEESNKVIVDLSHKDQEFVLVKGGKGGKGNAKFATPTRQAPHYAEPGMPGDELSIVLELKLLADVGLLGFPNVGKSTLLSMTTKATPKIANYHFTTLKPNLGVVAVDGIEPFVMADIPGIIEGAAEGVGLGIQFLKHIERTRLLVHIVDISGLEGREPFEDFVKINEELKKYSVKLWDRPQIVVANKSDLLYDDEVFEEFERKVKELGFAKVYKMSAATRDGVDEVIKEAARMLKEIPVKELEISEDEMYIPEEKKFTYAIDIEKDEEYNTYVISGTFVDRLLSAVNIHDADSLRYFHKVLRNKGIMNELREMGIEDGDVVRLNDFEFEYLL.

Residues 1–158 enclose the Obg domain; the sequence is MFIDIAKVFI…LSIVLELKLL (158 aa). An OBG-type G domain is found at 159-331; that stretch reads ADVGLLGFPN…VIKEAARMLK (173 aa). Residues 165–172, 190–194, 212–215, 282–285, and 312–314 contribute to the GTP site; these read GFPNVGKS, FTTLK, DIPG, NKSD, and SAA. Mg(2+) contacts are provided by serine 172 and threonine 192. The OCT domain maps to 345 to 428; sequence MYIPEEKKFT…LNDFEFEYLL (84 aa).

The protein belongs to the TRAFAC class OBG-HflX-like GTPase superfamily. OBG GTPase family. As to quaternary structure, monomer. Mg(2+) is required as a cofactor.

It localises to the cytoplasm. In terms of biological role, an essential GTPase which binds GTP, GDP and possibly (p)ppGpp with moderate affinity, with high nucleotide exchange rates and a fairly low GTP hydrolysis rate. Plays a role in control of the cell cycle, stress response, ribosome biogenesis and in those bacteria that undergo differentiation, in morphogenesis control. This chain is GTPase Obg, found in Clostridium botulinum (strain Alaska E43 / Type E3).